The chain runs to 180 residues: ATP-dependent protease subunit HslV (180 aa).

The active site involves T5. G165, C168, and T171 together coordinate Na(+).

The protein belongs to the peptidase T1B family. HslV subfamily. A double ring-shaped homohexamer of HslV is capped on each side by a ring-shaped HslU homohexamer. The assembly of the HslU/HslV complex is dependent on binding of ATP.

The protein localises to the cytoplasm. It carries out the reaction ATP-dependent cleavage of peptide bonds with broad specificity.. Allosterically activated by HslU binding. Functionally, protease subunit of a proteasome-like degradation complex believed to be a general protein degrading machinery. This is ATP-dependent protease subunit HslV from Helicobacter pylori (strain J99 / ATCC 700824) (Campylobacter pylori J99).